The sequence spans 470 residues: ESX-4 secretion system ATPase EccB4 (470 aa).

Residues 44–64 (LALGCVLAIVAAMGCAFVALL) traverse the membrane as a helical segment.

This sequence belongs to the EccB family. As to quaternary structure, part of the ESX-4 / type VII secretion system (T7SS), which is composed of cytosolic and membrane components.

The protein localises to the cell membrane. Functionally, an ATPase. This Mycobacterium tuberculosis (strain CDC 1551 / Oshkosh) protein is ESX-4 secretion system ATPase EccB4 (eccB4).